Here is a 274-residue protein sequence, read N- to C-terminus: Large ribosomal subunit protein uL2 (274 aa).

Disordered regions lie at residues 1-23 and 222-242; these read MAIK…SFEE and GSAM…SPIG.

This sequence belongs to the universal ribosomal protein uL2 family. As to quaternary structure, part of the 50S ribosomal subunit. Forms a bridge to the 30S subunit in the 70S ribosome.

Functionally, one of the primary rRNA binding proteins. Required for association of the 30S and 50S subunits to form the 70S ribosome, for tRNA binding and peptide bond formation. It has been suggested to have peptidyltransferase activity; this is somewhat controversial. Makes several contacts with the 16S rRNA in the 70S ribosome. The chain is Large ribosomal subunit protein uL2 from Dehalococcoides mccartyi (strain ATCC BAA-2266 / KCTC 15142 / 195) (Dehalococcoides ethenogenes (strain 195)).